The following is a 217-amino-acid chain: tRNA (guanine-N(7)-)-methyltransferase (217 aa).

Positions 44, 69, 96, and 118 each coordinate S-adenosyl-L-methionine. The active site involves Asp118. Substrate is bound by residues Lys122, Asp154, and 191-194 (TEYE).

It belongs to the class I-like SAM-binding methyltransferase superfamily. TrmB family.

It carries out the reaction guanosine(46) in tRNA + S-adenosyl-L-methionine = N(7)-methylguanosine(46) in tRNA + S-adenosyl-L-homocysteine. It participates in tRNA modification; N(7)-methylguanine-tRNA biosynthesis. Functionally, catalyzes the formation of N(7)-methylguanine at position 46 (m7G46) in tRNA. This chain is tRNA (guanine-N(7)-)-methyltransferase, found in Bacillus cereus (strain B4264).